A 315-amino-acid polypeptide reads, in one-letter code: MQIKLANPRGFCAGVDRAIEIVNRALEVFGPPIYVRHEVVHNKFVVEDLRNRGAVFVEELDQVPDDVIVIFSAHGVSQAVRQEAAGRGLKVFDATCPLVTKVHIEVAKYSRDGRECILIGHAGHPEVEGTMGQYDASNGGSIYLVEDEKDVAALQVRNPDHLAFVTQTTLSMDDTSRVIDALRERFPNIGGPRKDDICYATQNRQDAVKQLADECDVVLVVGSPNSSNSNRLRELAERMSTPAYLIDGAEDLQRSWFDGAQRIGITAGASAPEVLVRGVIDQLKAWGATGAEELDGREENITFSMPKELRVRSLI.

C12 provides a ligand contact to [4Fe-4S] cluster. Positions 41 and 74 each coordinate (2E)-4-hydroxy-3-methylbut-2-enyl diphosphate. Positions 41 and 74 each coordinate dimethylallyl diphosphate. H41 and H74 together coordinate isopentenyl diphosphate. C96 lines the [4Fe-4S] cluster pocket. H124 is a (2E)-4-hydroxy-3-methylbut-2-enyl diphosphate binding site. Dimethylallyl diphosphate is bound at residue H124. Residue H124 coordinates isopentenyl diphosphate. E126 acts as the Proton donor in catalysis. A (2E)-4-hydroxy-3-methylbut-2-enyl diphosphate-binding site is contributed by T168. Residue C198 coordinates [4Fe-4S] cluster. S226, S227, N228, and S270 together coordinate (2E)-4-hydroxy-3-methylbut-2-enyl diphosphate. S226, S227, N228, and S270 together coordinate dimethylallyl diphosphate. Isopentenyl diphosphate is bound by residues S226, S227, N228, and S270.

This sequence belongs to the IspH family. [4Fe-4S] cluster is required as a cofactor.

The catalysed reaction is isopentenyl diphosphate + 2 oxidized [2Fe-2S]-[ferredoxin] + H2O = (2E)-4-hydroxy-3-methylbut-2-enyl diphosphate + 2 reduced [2Fe-2S]-[ferredoxin] + 2 H(+). It catalyses the reaction dimethylallyl diphosphate + 2 oxidized [2Fe-2S]-[ferredoxin] + H2O = (2E)-4-hydroxy-3-methylbut-2-enyl diphosphate + 2 reduced [2Fe-2S]-[ferredoxin] + 2 H(+). It functions in the pathway isoprenoid biosynthesis; dimethylallyl diphosphate biosynthesis; dimethylallyl diphosphate from (2E)-4-hydroxy-3-methylbutenyl diphosphate: step 1/1. Its pathway is isoprenoid biosynthesis; isopentenyl diphosphate biosynthesis via DXP pathway; isopentenyl diphosphate from 1-deoxy-D-xylulose 5-phosphate: step 6/6. Functionally, catalyzes the conversion of 1-hydroxy-2-methyl-2-(E)-butenyl 4-diphosphate (HMBPP) into a mixture of isopentenyl diphosphate (IPP) and dimethylallyl diphosphate (DMAPP). Acts in the terminal step of the DOXP/MEP pathway for isoprenoid precursor biosynthesis. The polypeptide is 4-hydroxy-3-methylbut-2-enyl diphosphate reductase (Pseudomonas entomophila (strain L48)).